The primary structure comprises 314 residues: Nucleoprotein (314 aa).

Met-1 is subject to N-acetylmethionine; by host. RNA is bound by residues Tyr-38, Tyr-41, Arg-118, Lys-237, and Ser-266.

This sequence belongs to the tenuiviruses nucleocapsid protein family.

It is found in the virion. It localises to the host cytoplasm. In terms of biological role, encapsidates the genome, protecting it from nucleases. The encapsidated genomic RNA is termed the nucleocapsid (NC), and serves as template for viral transcription and replication. The protein is Nucleoprotein of Wheat yellow head virus (WYHV).